A 109-amino-acid chain; its full sequence is Large ribosomal subunit protein uL22 (109 aa).

This sequence belongs to the universal ribosomal protein uL22 family. In terms of assembly, part of the 50S ribosomal subunit.

Its function is as follows. This protein binds specifically to 23S rRNA; its binding is stimulated by other ribosomal proteins, e.g. L4, L17, and L20. It is important during the early stages of 50S assembly. It makes multiple contacts with different domains of the 23S rRNA in the assembled 50S subunit and ribosome. In terms of biological role, the globular domain of the protein is located near the polypeptide exit tunnel on the outside of the subunit, while an extended beta-hairpin is found that lines the wall of the exit tunnel in the center of the 70S ribosome. This chain is Large ribosomal subunit protein uL22, found in Wolinella succinogenes (strain ATCC 29543 / DSM 1740 / CCUG 13145 / JCM 31913 / LMG 7466 / NCTC 11488 / FDC 602W) (Vibrio succinogenes).